A 537-amino-acid polypeptide reads, in one-letter code: CTP synthase (537 aa).

Residues 1–268 (MPAKFIFVTG…DSIVVERLKL (268 aa)) form an amidoligase domain region. CTP is bound at residue Ser14. Ser14 is a binding site for UTP. ATP is bound at residue 15 to 20 (SLGKGI). Tyr55 is an L-glutamine binding site. ATP is bound at residue Asp72. Positions 72 and 142 each coordinate Mg(2+). CTP contacts are provided by residues 149 to 151 (DIE), 189 to 194 (KTKPTQ), and Lys225. Residues 189-194 (KTKPTQ) and Lys225 each bind UTP. The Glutamine amidotransferase type-1 domain occupies 293–534 (EIALVGKYVT…IGAACRRAGG (242 aa)). An L-glutamine-binding site is contributed by Gly354. The Nucleophile; for glutamine hydrolysis role is filled by Cys381. Residues 382-385 (LGMQ), Glu405, and Arg462 contribute to the L-glutamine site. Residues His507 and Glu509 contribute to the active site.

This sequence belongs to the CTP synthase family. In terms of assembly, homotetramer.

The catalysed reaction is UTP + L-glutamine + ATP + H2O = CTP + L-glutamate + ADP + phosphate + 2 H(+). It catalyses the reaction L-glutamine + H2O = L-glutamate + NH4(+). It carries out the reaction UTP + NH4(+) + ATP = CTP + ADP + phosphate + 2 H(+). The protein operates within pyrimidine metabolism; CTP biosynthesis via de novo pathway; CTP from UDP: step 2/2. With respect to regulation, allosterically activated by GTP, when glutamine is the substrate; GTP has no effect on the reaction when ammonia is the substrate. The allosteric effector GTP functions by stabilizing the protein conformation that binds the tetrahedral intermediate(s) formed during glutamine hydrolysis. Inhibited by the product CTP, via allosteric rather than competitive inhibition. Its function is as follows. Catalyzes the ATP-dependent amination of UTP to CTP with either L-glutamine or ammonia as the source of nitrogen. Regulates intracellular CTP levels through interactions with the four ribonucleotide triphosphates. The sequence is that of CTP synthase from Moorella thermoacetica (strain ATCC 39073 / JCM 9320).